Here is an 84-residue protein sequence, read N- to C-terminus: Putative defensin-like protein 63 (84 aa).

The first 21 residues, 1 to 21 (MDIRKTYVIIFFVGILTISFS), serve as a signal peptide directing secretion. Disulfide bonds link C40–C81, C44–C67, C53–C79, and C57–C80.

It belongs to the DEFL family.

Its subcellular location is the secreted. The sequence is that of Putative defensin-like protein 63 from Arabidopsis thaliana (Mouse-ear cress).